We begin with the raw amino-acid sequence, 254 residues long: Phosphoribosylaminoimidazole-succinocarboxamide synthase 1 (254 aa).

It belongs to the SAICAR synthetase family.

The catalysed reaction is 5-amino-1-(5-phospho-D-ribosyl)imidazole-4-carboxylate + L-aspartate + ATP = (2S)-2-[5-amino-1-(5-phospho-beta-D-ribosyl)imidazole-4-carboxamido]succinate + ADP + phosphate + 2 H(+). The protein operates within purine metabolism; IMP biosynthesis via de novo pathway; 5-amino-1-(5-phospho-D-ribosyl)imidazole-4-carboxamide from 5-amino-1-(5-phospho-D-ribosyl)imidazole-4-carboxylate: step 1/2. In Agrobacterium fabrum (strain C58 / ATCC 33970) (Agrobacterium tumefaciens (strain C58)), this protein is Phosphoribosylaminoimidazole-succinocarboxamide synthase 1 (purC1).